We begin with the raw amino-acid sequence, 109 residues long: uncharacterized protein (109 aa).

The protein localises to the mitochondrion. This is an uncharacterized protein from Marchantia polymorpha (Common liverwort).